Here is a 246-residue protein sequence, read N- to C-terminus: Probable transcriptional regulatory protein APP7_1210 (246 aa).

The protein belongs to the TACO1 family.

It localises to the cytoplasm. This is Probable transcriptional regulatory protein APP7_1210 from Actinobacillus pleuropneumoniae serotype 7 (strain AP76).